The sequence spans 200 residues: MTEVLRVGQPAPDFTATAIVDQSFQTVKLSTYRGKYLVLFFYPLDFTFVCPTEIIAFSDRHSEFTALDTEVVGISVDSEFSHLAWIQTERKMGGIGNINYPLVSDLKKEISQAYNVLEPDAGIALRGLFIIDREGILQYATVNNLSFGRSVDETLRVLKAIRHVQSHPNEVCPVDWQEGDKTMIPDPEKAKTYFETVAEP.

The Thioredoxin domain occupies 5 to 163 (LRVGQPAPDF…TLRVLKAIRH (159 aa)). Residue Cys-50 is the Cysteine sulfenic acid (-SOH) intermediate of the active site.

Belongs to the peroxiredoxin family. AhpC/Prx1 subfamily. In terms of assembly, homodimer; disulfide-linked, upon oxidation.

It is found in the cytoplasm. The catalysed reaction is a hydroperoxide + [thioredoxin]-dithiol = an alcohol + [thioredoxin]-disulfide + H2O. In terms of biological role, thiol-specific peroxidase that catalyzes the reduction of hydrogen peroxide and organic hydroperoxides to water and alcohols, respectively. Plays a role in cell protection against oxidative stress by detoxifying peroxides. The polypeptide is Putative peroxiredoxin sll0755 (Synechocystis sp. (strain ATCC 27184 / PCC 6803 / Kazusa)).